We begin with the raw amino-acid sequence, 407 residues long: Peptidase T (407 aa).

H82 is a binding site for Zn(2+). Residue D84 is part of the active site. D143 provides a ligand contact to Zn(2+). Catalysis depends on E177, which acts as the Proton acceptor. 3 residues coordinate Zn(2+): E178, D200, and H382.

Belongs to the peptidase M20B family. It depends on Zn(2+) as a cofactor.

It is found in the cytoplasm. The catalysed reaction is Release of the N-terminal residue from a tripeptide.. In terms of biological role, cleaves the N-terminal amino acid of tripeptides. This Streptococcus pyogenes serotype M6 (strain ATCC BAA-946 / MGAS10394) protein is Peptidase T.